The chain runs to 157 residues: 2-C-methyl-D-erythritol 2,4-cyclodiphosphate synthase (157 aa).

The a divalent metal cation site is built by Asp8 and His10. Residues 8–10 (DVH) and 34–35 (HS) contribute to the 4-CDP-2-C-methyl-D-erythritol 2-phosphate site. His42 is a binding site for a divalent metal cation. 4-CDP-2-C-methyl-D-erythritol 2-phosphate contacts are provided by residues 56 to 58 (DIG), 132 to 135 (TTNE), and Arg142.

Belongs to the IspF family. As to quaternary structure, homotrimer. The cofactor is a divalent metal cation.

It carries out the reaction 4-CDP-2-C-methyl-D-erythritol 2-phosphate = 2-C-methyl-D-erythritol 2,4-cyclic diphosphate + CMP. Its pathway is isoprenoid biosynthesis; isopentenyl diphosphate biosynthesis via DXP pathway; isopentenyl diphosphate from 1-deoxy-D-xylulose 5-phosphate: step 4/6. Its function is as follows. Involved in the biosynthesis of isopentenyl diphosphate (IPP) and dimethylallyl diphosphate (DMAPP), two major building blocks of isoprenoid compounds. Catalyzes the conversion of 4-diphosphocytidyl-2-C-methyl-D-erythritol 2-phosphate (CDP-ME2P) to 2-C-methyl-D-erythritol 2,4-cyclodiphosphate (ME-CPP) with a corresponding release of cytidine 5-monophosphate (CMP). The sequence is that of 2-C-methyl-D-erythritol 2,4-cyclodiphosphate synthase from Chlorobaculum parvum (strain DSM 263 / NCIMB 8327) (Chlorobium vibrioforme subsp. thiosulfatophilum).